Consider the following 370-residue polypeptide: Prolactin-releasing peptide receptor (370 aa).

Topologically, residues 1-62 (MASLPTQGPA…LQLVHQLKGL (62 aa)) are extracellular. N-linked (GlcNAc...) asparagine glycosylation is found at Asn27 and Asn36. Residues 63 to 83 (IVLLYSIVVVVGLVGNCLLVL) form a helical membrane-spanning segment. The Cytoplasmic portion of the chain corresponds to 84 to 101 (VIARVRRLHNVTNFLIGN). A helical transmembrane segment spans residues 102-122 (LALSDVLMCTACVPLTLAYAF). At 123-126 (EPRG) the chain is on the extracellular side. Residues 127–147 (WVFGGGLCHLVFFLQPVTVYV) form a helical membrane-spanning segment. A disulfide bridge links Cys134 with Cys211. Residues 148–175 (SVFTLTTIAVDRYVVLVHPLRRRISLRF) are Cytoplasmic-facing. A helical membrane pass occupies residues 176-196 (SAYAVLAIWALSAVLALPAAL). Residues 197 to 225 (HTYHVELKPHRVRLCEEFWGSQERQRQLY) lie on the Extracellular side of the membrane. Residues 226 to 246 (AWGLLLVTYLLPLLVILLSYV) form a helical membrane-spanning segment. The Cytoplasmic portion of the chain corresponds to 247–276 (RVSVNLRNRVVPGCVTQSQADWDRARRRRT). A helical membrane pass occupies residues 277–297 (FCLLVVVVVVFAVCWLPLHVF). Residues 298–317 (NLLRDLDPHAIDPYAFGLVQ) are Extracellular-facing. Residues 318 to 338 (LLCHWLAMSSACYNPFIYAWL) traverse the membrane as a helical segment. At 339–369 (HDSFREELRKLLLAWPRKIAPHGQSMTVSVV) the chain is on the cytoplasmic side. Positions 365 to 370 (TVSVVI) are required for interaction with GRIP1, GRIP2 and PICK1.

The protein belongs to the G-protein coupled receptor 1 family. Interacts through its C-terminal region with the PDZ domain-containing proteins GRIP1, GRIP2 and PICK1. Interacts with PDZ domains 4 and 5 of GRIP1 and with the PDZ domain of PICK1.

Its subcellular location is the cell membrane. In terms of biological role, receptor for prolactin-releasing peptide (PrRP). Implicated in lactation, regulation of food intake and pain-signal processing. This Bos taurus (Bovine) protein is Prolactin-releasing peptide receptor (PRLHR).